The primary structure comprises 309 residues: Golgi to ER traffic protein 4 homolog (309 aa).

The tract at residues 290–309 (SGGGLASMEVDGPTIEDEMD) is disordered.

Belongs to the GET4 family.

Its function is as follows. May play a role in insertion of tail-anchored proteins into the endoplasmic reticulum membrane. This chain is Golgi to ER traffic protein 4 homolog, found in Dictyostelium discoideum (Social amoeba).